A 170-amino-acid polypeptide reads, in one-letter code: uncharacterized protein (170 aa).

Belongs to the mimivirus L223/L227/L812 family.

This is an uncharacterized protein from Acanthamoeba polyphaga mimivirus (APMV).